Here is a 336-residue protein sequence, read N- to C-terminus: Fructose-1,6-bisphosphatase class 1 (336 aa).

Residues glutamate 92, aspartate 115, leucine 117, and aspartate 118 each coordinate Mg(2+). Substrate contacts are provided by residues 118 to 121 (DGSS), asparagine 211, tyrosine 244, 262 to 264 (YLY), and lysine 274. Residue glutamate 280 coordinates Mg(2+).

The protein belongs to the FBPase class 1 family. In terms of assembly, homotetramer. Mg(2+) is required as a cofactor.

The protein localises to the cytoplasm. It carries out the reaction beta-D-fructose 1,6-bisphosphate + H2O = beta-D-fructose 6-phosphate + phosphate. It participates in carbohydrate biosynthesis; gluconeogenesis. The sequence is that of Fructose-1,6-bisphosphatase class 1 from Aliivibrio salmonicida (strain LFI1238) (Vibrio salmonicida (strain LFI1238)).